The chain runs to 298 residues: GTP cyclohydrolase FolE2 (298 aa).

This sequence belongs to the GTP cyclohydrolase IV family.

The catalysed reaction is GTP + H2O = 7,8-dihydroneopterin 3'-triphosphate + formate + H(+). It functions in the pathway cofactor biosynthesis; 7,8-dihydroneopterin triphosphate biosynthesis; 7,8-dihydroneopterin triphosphate from GTP: step 1/1. In terms of biological role, converts GTP to 7,8-dihydroneopterin triphosphate. The chain is GTP cyclohydrolase FolE2 from Pseudomonas fluorescens (strain Pf0-1).